We begin with the raw amino-acid sequence, 408 residues long: MSRQINAATPSSSRRHRLSLSRRRINFTTSPEAQPSSSSRSQPSSSSRSHRRQERRQEQRVSEENVQIIGNVNEPLTRTYHRQGVTYYVHGQVNISNDDPLLSQEDDVILINSENVDRERFPDITAQQYQDNIASETAAQRALQRGLDLEAQLMNEIAPRSPTYSPSYSPNYVIPQSPDLFASPQSPQPQQQQQQQSEPEEEVEVSCNICFTTFKDTKNVNSSFVTSIHCNHAVCFKCYVKIIMDNSVYKCFCSATSSDCRVYNKHGYVEFMPINVTRNQDSIKQHWRELLENNTVNNHTTDLNYVEQLQKELSELRAKTSQVEHKMTMLNSDYIMLKHKHAVAELDLQKANYDLQESTKKSEELQSTVNNLQEQLRKQVAESQAKFSEFERSNSDLVSKLQTVMSRR.

A compositionally biased stretch (polar residues) spans 1–10 (MSRQINAATP). 2 disordered regions span residues 1 to 67 (MSRQ…ENVQ) and 176 to 199 (QSPD…QSEP). Residues 13–25 (SRRHRLSLSRRRI) show a composition bias toward basic residues. Residues 30–47 (SPEAQPSSSSRSQPSSSS) show a composition bias toward low complexity. Repeat copies occupy residues 34-41 (QPSSSSRS), 42-49 (QPSSSSRS), 51-54 (RRQE), and 55-58 (RRQE). The interval 34–49 (QPSSSSRSQPSSSSRS) is 2 X 8 AA tandem repeats of Q-P-S-S-S-S-R-S. Residues 51–58 (RRQERRQE) are 2 X 4 AA tandem repeats of R-R-Q-E. The segment covering 183 to 197 (SPQSPQPQQQQQQQS) has biased composition (low complexity). The RING-type zinc-finger motif lies at 207-255 (CNICFTTFKDTKNVNSSFVTSIHCNHAVCFKCYVKIIMDNSVYKCFCSA).

Belongs to the alphabaculovirus IE2 protein family. In terms of assembly, homooligomer. In terms of processing, auto-ubiquitinated.

It localises to the host nucleus. It catalyses the reaction S-ubiquitinyl-[E2 ubiquitin-conjugating enzyme]-L-cysteine + [acceptor protein]-L-lysine = [E2 ubiquitin-conjugating enzyme]-L-cysteine + N(6)-ubiquitinyl-[acceptor protein]-L-lysine.. Functionally, RING-finger E3 ubiquitin ligase that plays an important regulatory role during the initial stages of infection. Migrates to specific nuclear foci early in infection supposely to prepare the sites for viral transcription and replication by targeting and ubiquitinating host proteins. Acts as a transcriptional activator and activates a number of viral promoters including itself, IE1 and the promoter of 39K gene. The sequence is that of E3 ubiquitin-protein ligase IE2 (IE2) from Lepidoptera (butterflies and moths).